The sequence spans 124 residues: Fluoride-specific ion channel FluC (124 aa).

4 helical membrane-spanning segments follow: residues 4-24 (VLFV…ISLL), 35-55 (FGTL…FALG), 62-82 (PEIK…FSTF), and 95-115 (LVKA…VVYL). The Na(+) site is built by G74 and T77.

Belongs to the fluoride channel Fluc/FEX (TC 1.A.43) family.

It is found in the cell inner membrane. It carries out the reaction fluoride(in) = fluoride(out). With respect to regulation, na(+) is not transported, but it plays an essential structural role and its presence is essential for fluoride channel function. Functionally, fluoride-specific ion channel. Important for reducing fluoride concentration in the cell, thus reducing its toxicity. The polypeptide is Fluoride-specific ion channel FluC (Shewanella halifaxensis (strain HAW-EB4)).